The primary structure comprises 207 residues: Probable GTP-binding protein EngB (207 aa).

Residues 24–199 (GGYEVAFAGR…RGIVGGWLGL (176 aa)) enclose the EngB-type G domain. GTP is bound by residues 32 to 39 (GRSNAGKS), 59 to 63 (GRTQQ), 77 to 80 (DLPG), 144 to 147 (TKAD), and 178 to 180 (YSG). 2 residues coordinate Mg(2+): serine 39 and threonine 61.

Belongs to the TRAFAC class TrmE-Era-EngA-EngB-Septin-like GTPase superfamily. EngB GTPase family. Mg(2+) serves as cofactor.

Its function is as follows. Necessary for normal cell division and for the maintenance of normal septation. This is Probable GTP-binding protein EngB from Xanthomonas oryzae pv. oryzae (strain MAFF 311018).